We begin with the raw amino-acid sequence, 343 residues long: Phosphate acyltransferase (343 aa).

This sequence belongs to the PlsX family. Homodimer. Probably interacts with PlsY.

It is found in the cytoplasm. It catalyses the reaction a fatty acyl-[ACP] + phosphate = an acyl phosphate + holo-[ACP]. It participates in lipid metabolism; phospholipid metabolism. Catalyzes the reversible formation of acyl-phosphate (acyl-PO(4)) from acyl-[acyl-carrier-protein] (acyl-ACP). This enzyme utilizes acyl-ACP as fatty acyl donor, but not acyl-CoA. This Neorickettsia sennetsu (strain ATCC VR-367 / Miyayama) (Ehrlichia sennetsu) protein is Phosphate acyltransferase.